Consider the following 381-residue polypeptide: Metallophosphoesterase 1 (381 aa).

A helical transmembrane segment spans residues 15-35 (LIFAFVSVFVFCEYVIYYLVI). The a divalent metal cation site is built by Asp-59, Asp-101, Asn-139, His-234, His-288, and His-290. A helical transmembrane segment spans residues 341-361 (TVLVVYCSSCLIIALITLIHL). Residues 377–381 (KHKTL) carry the Di-lysine motif motif.

The protein belongs to the metallophosphoesterase superfamily. MPPE1 family. Requires Mn(2+) as cofactor.

The protein localises to the endoplasmic reticulum-Golgi intermediate compartment membrane. Its function is as follows. Metallophosphoesterase that catalyzes the removal of a side-chain ethanolamine-phosphate (EtNP) from the second mannose of the GPI-anchor protein intermediate. Participates in the glycan remodeling steps of GPI-anchor maturation to allow an efficient transport of GPI-anchor proteins from the endoplasmic reticulum to the Golgi. This Danio rerio (Zebrafish) protein is Metallophosphoesterase 1.